Consider the following 230-residue polypeptide: Interleukin-6 (230 aa).

A signal peptide spans 1-24 (MASKHNADLSSAAMLAALLLCALG). The cysteines at positions 96 and 106 are disulfide-linked. An N-linked (GlcNAc...) asparagine glycan is attached at asparagine 100. The segment covering 206 to 218 (REMPKQKRRKDDG) has biased composition (basic and acidic residues). The tract at residues 206 to 230 (REMPKQKRRKDDGIIPPIHPSYQMT) is disordered.

The protein belongs to the IL-6 superfamily. Component of a hexamer of two molecules each of IL6, IL6R and IL6ST; first binds to IL6R to associate with the signaling subunit IL6ST. As to expression, expressed in kidney and spleen. Low expression in liver and gills.

It localises to the secreted. In terms of biological role, cytokine with a wide variety of biological functions in immunity, tissue regeneration, and metabolism. Binds to IL6R, then the complex associates to the signaling subunit IL6ST/gp130 to trigger the intracellular IL6-signaling pathway. The interaction with the membrane-bound IL6R and IL6ST stimulates 'classic signaling', whereas the binding of IL6 and soluble IL6R to IL6ST stimulates 'trans-signaling'. Alternatively, 'cluster signaling' occurs when membrane-bound IL6:IL6R complexes on transmitter cells activate IL6ST receptors on neighboring receiver cells. The chain is Interleukin-6 (il6) from Paralichthys olivaceus (Bastard halibut).